The primary structure comprises 425 residues: Glutamyl-tRNA reductase (425 aa).

Residues 49–52 (TCNR), Ser107, 112–114 (EPQ), and Gln118 contribute to the substrate site. The active-site Nucleophile is the Cys50. Residue 187–192 (GAGETI) participates in NADP(+) binding.

The protein belongs to the glutamyl-tRNA reductase family. As to quaternary structure, homodimer.

The enzyme catalyses (S)-4-amino-5-oxopentanoate + tRNA(Glu) + NADP(+) = L-glutamyl-tRNA(Glu) + NADPH + H(+). It participates in porphyrin-containing compound metabolism; protoporphyrin-IX biosynthesis; 5-aminolevulinate from L-glutamyl-tRNA(Glu): step 1/2. Its function is as follows. Catalyzes the NADPH-dependent reduction of glutamyl-tRNA(Glu) to glutamate 1-semialdehyde (GSA). In Pseudomonas savastanoi pv. phaseolicola (strain 1448A / Race 6) (Pseudomonas syringae pv. phaseolicola (strain 1448A / Race 6)), this protein is Glutamyl-tRNA reductase.